Here is a 455-residue protein sequence, read N- to C-terminus: Gamma-aminobutyric acid receptor subunit alpha-1 (455 aa).

An N-terminal signal peptide occupies residues 1–27 (MKKSRGLSDYLWAWTLILSTLSGRSYG). Over 28 to 252 (QPSQDELKDN…FHLKRKIGYF (225 aa)) the chain is Extracellular. An N-linked (GlcNAc...) asparagine glycan is attached at N37. R93 contacts 4-aminobutanoate. N137 carries N-linked (GlcNAc...) asparagine glycosylation. T156 is a binding site for 4-aminobutanoate. C165 and C179 are disulfide-bonded. A helical transmembrane segment spans residues 253–273 (VIQTYLPCIMTVILSQVSFWL). Residues 274–278 (NRESV) lie on the Cytoplasmic side of the membrane. A helical transmembrane segment spans residues 279–300 (PARTVFGVTTVLTMTTLSISAR). At 301–310 (NSLPKVAYAT) the chain is on the extracellular side. The helical transmembrane segment at 311–332 (AMDWFIAVCYAFVFSALIEFAT) threads the bilayer. Topologically, residues 333–420 (VNYFTKRGYA…TFNSVSKIDR (88 aa)) are cytoplasmic. A helical membrane pass occupies residues 421 to 440 (LSRIAFPLLFGIFNLVYWAT). Topologically, residues 441-455 (YLNREPQLKAPTPHQ) are extracellular.

This sequence belongs to the ligand-gated ion channel (TC 1.A.9) family. Gamma-aminobutyric acid receptor (TC 1.A.9.5) subfamily. GABRA1 sub-subfamily. As to quaternary structure, heteropentamer, formed by a combination of alpha (GABRA1-6), beta (GABRB1-3), gamma (GABRG1-3), delta (GABRD), epsilon (GABRE), rho (GABRR1-3), pi (GABRP) and theta (GABRQ) subunits, each subunit exhibiting distinct physiological and pharmacological properties. Interacts with UBQLN1. Interacts with TRAK1. Interacts with KIF21B. Identified in a complex of 720 kDa composed of LHFPL4, NLGN2, GABRA1, GABRB2, GABRG2 and GABRB3. Interacts with LHFPL4. Interacts with NLGN2. Interacts with SHISA7; interaction leads to the regulation of GABA(A) receptor trafficking, channel deactivation kinetics and pharmacology. In terms of processing, glycosylated. As to expression, expressed in the cerebellum.

The protein localises to the postsynaptic cell membrane. The protein resides in the cell membrane. It localises to the cytoplasmic vesicle membrane. The enzyme catalyses chloride(in) = chloride(out). Its activity is regulated as follows. Allosterically activated by benzodiazepines, the neuroanesthetic alphaxalone and pentobarbital. Inhibited by the antagonist bicuculline. Potentiated by histamine. Its function is as follows. Alpha subunit of the heteropentameric ligand-gated chloride channel gated by Gamma-aminobutyric acid (GABA), a major inhibitory neurotransmitter in the brain. GABA-gated chloride channels, also named GABA(A) receptors (GABAAR), consist of five subunits arranged around a central pore and contain GABA active binding site(s) located at the alpha and beta subunit interface(s). When activated by GABA, GABAARs selectively allow the flow of chloride anions across the cell membrane down their electrochemical gradient. Alpha-1/GABRA1-containing GABAARs are largely synaptic. Chloride influx into the postsynaptic neuron following GABAAR opening decreases the neuron ability to generate a new action potential, thereby reducing nerve transmission. GABAARs containing alpha-1 and beta-2 or -3 subunits exhibit synaptogenic activity; the gamma-2 subunit being necessary but not sufficient to induce rapid synaptic contacts formation. GABAARs function also as histamine receptor where histamine binds at the interface of two neighboring beta subunits and potentiates GABA response. GABAARs containing alpha, beta and epsilon subunits also permit spontaneous chloride channel activity while preserving the structural information required for GABA-gated openings. Alpha-1-mediated plasticity in the orbitofrontal cortex regulates context-dependent action selection. Together with rho subunits, may also control neuronal and glial GABAergic transmission in the cerebellum. This Mus musculus (Mouse) protein is Gamma-aminobutyric acid receptor subunit alpha-1.